We begin with the raw amino-acid sequence, 380 residues long: Cytochrome b (380 aa).

The next 4 helical transmembrane spans lie at 34-54 (FGSL…LLAT), 78-99 (WLIR…YLHI), 114-134 (WNTG…GYVL), and 179-199 (FFAL…IHLT). Heme b is bound by residues histidine 84 and histidine 98. Residues histidine 183 and histidine 197 each coordinate heme b. Histidine 202 contributes to the a ubiquinone binding site. 4 helical membrane-spanning segments follow: residues 227–247 (LKDI…ALFS), 289–309 (LGGV…PLLH), 321–341 (LSQL…WVGS), and 348–368 (FIII…LLFP).

The protein belongs to the cytochrome b family. In terms of assembly, the cytochrome bc1 complex contains 11 subunits: 3 respiratory subunits (MT-CYB, CYC1 and UQCRFS1), 2 core proteins (UQCRC1 and UQCRC2) and 6 low-molecular weight proteins (UQCRH/QCR6, UQCRB/QCR7, UQCRQ/QCR8, UQCR10/QCR9, UQCR11/QCR10 and a cleavage product of UQCRFS1). This cytochrome bc1 complex then forms a dimer. Heme b serves as cofactor.

The protein localises to the mitochondrion inner membrane. In terms of biological role, component of the ubiquinol-cytochrome c reductase complex (complex III or cytochrome b-c1 complex) that is part of the mitochondrial respiratory chain. The b-c1 complex mediates electron transfer from ubiquinol to cytochrome c. Contributes to the generation of a proton gradient across the mitochondrial membrane that is then used for ATP synthesis. The sequence is that of Cytochrome b (MT-CYB) from Uria lomvia (Thick-billed murre).